We begin with the raw amino-acid sequence, 415 residues long: Levansucrase LscA (415 aa).

The sucrose site is built by Trp45, Asp46, Ala132, Arg202, and Asp203. The Nucleophile role is filled by Asp46. Residue Glu287 is the Proton donor/acceptor of the active site.

The protein belongs to the glycosyl hydrolase 68 family.

It is found in the periplasm. The catalysed reaction is [6)-beta-D-fructofuranosyl-(2-&gt;](n) alpha-D-glucopyranoside + sucrose = [6)-beta-D-fructofuranosyl-(2-&gt;](n+1) alpha-D-glucopyranoside + D-glucose. Catalyzes the synthesis of levan, a fructose polymer, by transferring the fructosyl moiety from sucrose to a growing acceptor molecule. LscA encodes a functional enzyme in vitro, when expressed in E.coli under control of the vector-based lactose promoter (Plac), and it can restore levan production to the lscB-lscC double mutant. However, lscA is not expressed in P.savastanoi pv. glycinea PG4180 under standard conditions. It could be an ancestral Lsc variant in P.syringae. The protein is Levansucrase LscA of Pseudomonas savastanoi pv. glycinea (Pseudomonas syringae pv. glycinea).